Consider the following 274-residue polypeptide: N-acetylmuramic acid 6-phosphate etherase (274 aa).

The SIS domain maps to 52–215 (IIPRMEQGGR…STSIMIRLGR (164 aa)). The active-site Proton donor is the glutamate 80. Glutamate 111 is an active-site residue.

It belongs to the GCKR-like family. MurNAc-6-P etherase subfamily. As to quaternary structure, homodimer.

It catalyses the reaction N-acetyl-D-muramate 6-phosphate + H2O = N-acetyl-D-glucosamine 6-phosphate + (R)-lactate. It participates in amino-sugar metabolism; N-acetylmuramate degradation. Specifically catalyzes the cleavage of the D-lactyl ether substituent of MurNAc 6-phosphate, producing GlcNAc 6-phosphate and D-lactate. The chain is N-acetylmuramic acid 6-phosphate etherase from Porphyromonas gingivalis (strain ATCC BAA-308 / W83).